A 535-amino-acid chain; its full sequence is uncharacterized protein (535 aa).

A helical membrane pass occupies residues 17-37; the sequence is IVLLCMIGFFCTTFMRIHFAL. N-linked (GlcNAc...) asparagine glycans are attached at residues asparagine 44 and asparagine 61. Transmembrane regions (helical) follow at residues 107–127, 144–164, 167–187, 199–219, 225–245, and 292–312; these read LIFS…MFFI, ILVT…SVFL, IGMG…IGNW, IFTL…AAVC, WPAT…LWFF, and AFLG…LFQI. An N-linked (GlcNAc...) asparagine glycan is attached at asparagine 329. Helical transmembrane passes span 331–351, 368–388, 395–415, 429–451, and 463–483; these read TFTA…GIGI, VSHG…AFFV, TGLI…SGFY, MSAI…MSMF, and IFIG…LFGS.

This sequence belongs to the major facilitator superfamily. Sodium/anion cotransporter family.

The protein localises to the membrane. This is an uncharacterized protein from Caenorhabditis elegans.